The following is a 203-amino-acid chain: Ribosomal RNA small subunit methyltransferase G (203 aa).

Residues Gly73, Leu78, 124–125 (VE), and Arg138 each bind S-adenosyl-L-methionine.

It belongs to the methyltransferase superfamily. RNA methyltransferase RsmG family.

It is found in the cytoplasm. The enzyme catalyses guanosine(527) in 16S rRNA + S-adenosyl-L-methionine = N(7)-methylguanosine(527) in 16S rRNA + S-adenosyl-L-homocysteine. In terms of biological role, specifically methylates the N7 position of guanine in position 527 of 16S rRNA. This chain is Ribosomal RNA small subunit methyltransferase G, found in Haemophilus ducreyi (strain 35000HP / ATCC 700724).